The chain runs to 537 residues: Cytochrome P450 734A5 (537 aa).

Residues Gly13–Ala33 traverse the membrane as a helical segment. Cys480 contributes to the heme binding site.

This sequence belongs to the cytochrome P450 family. Requires heme as cofactor. In terms of tissue distribution, exclusively expressed in roots.

It is found in the membrane. Functionally, cytochrome P450 probably involved in brassinosteroids (BRs) inactivation and regulation of BRs homeostasis. This Oryza sativa subsp. japonica (Rice) protein is Cytochrome P450 734A5 (CYP734A5).